Here is an 800-residue protein sequence, read N- to C-terminus: Protein MEI2-like 5 (800 aa).

RRM domains follow at residues 168–241 (RTLF…FSIP) and 253–326 (GTLV…PSRP). Residues S384 and S390 each carry the phosphoserine modification. 2 disordered regions span residues 470–489 (GSPN…TSST) and 776–800 (VVDE…RERS). The span at 471–488 (SPNARSEPSSSSVWSTSS) shows a compositional bias: low complexity. Phosphoserine is present on residues S789 and S792.

Probable RNA-binding protein that plays a role in meiosis and vegetative growth. The protein is Protein MEI2-like 5 (ML5) of Arabidopsis thaliana (Mouse-ear cress).